Reading from the N-terminus, the 434-residue chain is Trigger factor (434 aa).

One can recognise a PPIase FKBP-type domain in the interval 160 to 245; that stretch reads GDKAKINFVG…LNEVQAANLP (86 aa).

This sequence belongs to the FKBP-type PPIase family. Tig subfamily.

The protein resides in the cytoplasm. The enzyme catalyses [protein]-peptidylproline (omega=180) = [protein]-peptidylproline (omega=0). Functionally, involved in protein export. Acts as a chaperone by maintaining the newly synthesized protein in an open conformation. Functions as a peptidyl-prolyl cis-trans isomerase. The chain is Trigger factor from Shewanella woodyi (strain ATCC 51908 / MS32).